Reading from the N-terminus, the 1024-residue chain is SAC3 family protein 1 (1024 aa).

Residues 1 to 62 form a disordered region; the sequence is MEKRNETGNN…QDSRQKRFSS (62 aa). Residues 11-21 are compositionally biased toward basic residues; the sequence is RLKRSNNRGKS. Over residues 22-38 the composition is skewed to basic and acidic residues; sequence KKDWKDASVETTPRETS. Over residues 39 to 52 the composition is skewed to acidic residues; the sequence is VDEDNTSVFEDVEA. One can recognise a PCI domain in the interval 243-433; the sequence is EVEQLRKGIL…NKTAFFNDSK (191 aa). A Phosphoserine modification is found at serine 841. Positions 945 to 1022 form a coiled coil; that stretch reads AQLEELEVVR…ARDLLKKVET (78 aa).

It belongs to the SAC3 family.

The protein localises to the cytoplasm. The protein resides in the nucleus envelope. In Schizosaccharomyces pombe (strain 972 / ATCC 24843) (Fission yeast), this protein is SAC3 family protein 1.